The primary structure comprises 105 residues: Thioredoxin (105 aa).

The Thioredoxin domain maps to 2–105; the sequence is VKSVGNLADF…KLEETIKSLV (104 aa). Catalysis depends on nucleophile residues Cys-32 and Cys-35. A disulfide bond links Cys-32 and Cys-35. S-nitrosocysteine is present on residues Cys-69 and Cys-73.

This sequence belongs to the thioredoxin family. Post-translationally, may be nitrosylated on several cysteine residues, depending on the oxidation state. Nitrosylated Cys-73 may serve as donor for nitrosylation of target proteins.

It localises to the nucleus. The protein localises to the cytoplasm. It is found in the secreted. Functionally, participates in various redox reactions through the reversible oxidation of its active center dithiol to a disulfide and catalyzes dithiol-disulfide exchange reactions. Plays a role in the reversible S-nitrosylation of cysteine residues in target proteins, and thereby contributes to the response to intracellular nitric oxide. Nitrosylates the active site Cys of CASP3 in response to nitric oxide (NO), and thereby inhibits caspase-3 activity. Induces the FOS/JUN AP-1 DNA binding activity in ionizing radiation (IR) cells through its oxidation/reduction status and stimulates AP-1 transcriptional activity. This is Thioredoxin (TXN) from Gallus gallus (Chicken).